The following is a 394-amino-acid chain: 1-deoxy-D-xylulose 5-phosphate reductoisomerase (394 aa).

NADPH-binding residues include T13, G14, S15, V16, R40, Q41, and N127. K128 lines the 1-deoxy-D-xylulose 5-phosphate pocket. E129 is a binding site for NADPH. D153 is a binding site for Mn(2+). 1-deoxy-D-xylulose 5-phosphate is bound by residues S154, E155, S184, and H207. E155 is a Mn(2+) binding site. G213 lines the NADPH pocket. Positions 220, 225, 226, and 229 each coordinate 1-deoxy-D-xylulose 5-phosphate. E229 is a binding site for Mn(2+).

It belongs to the DXR family. Mg(2+) is required as a cofactor. Requires Mn(2+) as cofactor.

The catalysed reaction is 2-C-methyl-D-erythritol 4-phosphate + NADP(+) = 1-deoxy-D-xylulose 5-phosphate + NADPH + H(+). The protein operates within isoprenoid biosynthesis; isopentenyl diphosphate biosynthesis via DXP pathway; isopentenyl diphosphate from 1-deoxy-D-xylulose 5-phosphate: step 1/6. In terms of biological role, catalyzes the NADPH-dependent rearrangement and reduction of 1-deoxy-D-xylulose-5-phosphate (DXP) to 2-C-methyl-D-erythritol 4-phosphate (MEP). The chain is 1-deoxy-D-xylulose 5-phosphate reductoisomerase from Chromobacterium violaceum (strain ATCC 12472 / DSM 30191 / JCM 1249 / CCUG 213 / NBRC 12614 / NCIMB 9131 / NCTC 9757 / MK).